The chain runs to 371 residues: tRNA-specific 2-thiouridylase MnmA (371 aa).

Residues 13–20 (GMSGGVDS) and Met-39 each bind ATP. The segment at 99-101 (NPD) is interaction with target base in tRNA. Cys-104 (nucleophile) is an active-site residue. Residues Cys-104 and Cys-200 are joined by a disulfide bond. Gly-128 provides a ligand contact to ATP. The segment at 150–152 (KDQ) is interaction with tRNA. Cys-200 acts as the Cysteine persulfide intermediate in catalysis. The segment at 308–309 (RY) is interaction with tRNA.

Belongs to the MnmA/TRMU family.

It localises to the cytoplasm. It carries out the reaction S-sulfanyl-L-cysteinyl-[protein] + uridine(34) in tRNA + AH2 + ATP = 2-thiouridine(34) in tRNA + L-cysteinyl-[protein] + A + AMP + diphosphate + H(+). Its function is as follows. Catalyzes the 2-thiolation of uridine at the wobble position (U34) of tRNA, leading to the formation of s(2)U34. The polypeptide is tRNA-specific 2-thiouridylase MnmA (Bacillus mycoides (strain KBAB4) (Bacillus weihenstephanensis)).